The chain runs to 1307 residues: Cyclic nucleotide-gated channel beta-1 (1307 aa).

Disordered stretches follow at residues 1–101 (MLGW…AQVA), 126–178 (QPVY…TEPS), 193–262 (LPQP…PGDP), 320–458 (DSCW…LDSC), 470–625 (LERA…SQNS), and 648–681 (EKLI…KPAE). Residues 1 to 720 (MLGWVQRVLP…SIDPLTNLMY (720 aa)) are Cytoplasmic-facing. Over residues 43 to 59 (VQPEPEPEPEPAPEEAA) the composition is skewed to acidic residues. The segment covering 165-174 (GSDKTSKTQD) has biased composition (basic and acidic residues). A compositionally biased stretch (acidic residues) spans 361–386 (QEEEEEEKEEKEEKEEEEEKEEEEKR). Basic and acidic residues predominate over residues 387-406 (EEEKKKEKEEEKKEKEKEEK). Composition is skewed to acidic residues over residues 407-451 (EEKE…EEEP) and 483-518 (LPEE…EEGE). Pro residues predominate over residues 550–560 (TIPPPERPPVS). Residues 621 to 631 (ASQNSAIINDR) are calmodulin-binding CaM1. The chain crosses the membrane as a helical span at residues 721-742 (ILWLFFVVLAWNWNCWLIPVRW). Topologically, residues 743-751 (AFPYQRADN) are extracellular. The helical transmembrane segment at 752-773 (IHLWLLMDYLCDFIYLLDITVF) threads the bilayer. Residues 774 to 788 (QMRLQFVKGGDIITD) are Cytoplasmic-facing. A helical transmembrane segment spans residues 789–808 (KKEMRNNYLKSQRFKMDLLC). Residues 809-824 (LLPLDFLYLKLGVNPL) are Extracellular-facing. Residues 825–837 (LRLPRCLKYMAFF) form a helical membrane-spanning segment. Residues 838–849 (EFNNRLEAILSK) lie on the Cytoplasmic side of the membrane. The chain crosses the membrane as a helical span at residues 850–872 (AYVYRVIRTTAYLLYSLHLNSCL). Residues 850 to 949 (AYVYRVIRTT…IGQMRDVVGA (100 aa)) are ion conduction pathway. Residues 873-895 (YYWASAFQGIGSTHWVYDGVGNS) are Extracellular-facing. The next 2 membrane-spanning stretches (helical) occupy residues 896–922 (YIRC…LFEI) and 923–948 (VFQL…DVVG). At 949 to 1307 (AATAGQTYYR…MLEEKKEEVE (359 aa)) the chain is on the cytoplasmic side. The tract at residues 952–1028 (AGQTYYRSCM…NIVSKVALFQ (77 aa)) is C-linker. The cNMP-binding domain stretch occupies residues 1026-1130 (LFQGCDRQMI…LDKKDLNEIL (105 aa)). The interval 1032–1148 (RQMIFDMLKR…LLRKKARRML (117 aa)) is cyclic nucleotide-binding domain. 3',5'-cyclic GMP-binding residues include Gly1093, Glu1094, Ser1096, Arg1106, and Thr1107. Arg1106 lines the 3',5'-cyclic AMP pocket. The calmodulin-binding CaM2 stretch occupies residues 1212-1218 (QQQLLEQ). A compositionally biased stretch (low complexity) spans 1214–1238 (QLLEQAKSSQEAGGEEGSGATDQPA). The disordered stretch occupies residues 1214-1307 (QLLEQAKSSQ…MLEEKKEEVE (94 aa)). The segment covering 1250 to 1261 (EPPAPSSPPPAS) has biased composition (pro residues).

Belongs to the cyclic nucleotide-gated cation channel (TC 1.A.1.5) family. CNGB1 subfamily. As to quaternary structure, the rod cyclic nucleotide-gated channel is a heterotetramer composed of CNGA1 and CNGB1 subunits with 3:1 stoichiometry. CNGA1:CNGB1 channel binds Ca(2+)-bound CALM1 via CaM1 and CaM2 regions of the CNGB1 subunit; this interaction modulates the affinity of the channel for cNMPs in response to intracellular Ca(2+) levels. The olfactory cyclic nucleotide-gated channel is a heterotetramer composed of CNGA2, CNGA4 and CNGB1b subunits with 2:1:1 stoichiometry. In terms of tissue distribution, expressed in olfactory sensory cilia (at protein level).

The protein localises to the cell projection. Its subcellular location is the cilium membrane. The catalysed reaction is Ca(2+)(in) = Ca(2+)(out). The enzyme catalyses Na(+)(in) = Na(+)(out). It carries out the reaction K(+)(in) = K(+)(out). It catalyses the reaction NH4(+)(in) = NH4(+)(out). The catalysed reaction is Rb(+)(in) = Rb(+)(out). The enzyme catalyses Li(+)(in) = Li(+)(out). It carries out the reaction Cs(+)(in) = Cs(+)(out). Pore-forming subunit of the rod cyclic nucleotide-gated channel. Mediates rod photoresponses at dim light converting transient changes in intracellular cGMP levels into electrical signals. In the dark, cGMP levels are high and keep the channel open enabling a steady inward current carried by Na(+) and Ca(2+) ions that leads to membrane depolarization and neurotransmitter release from synaptic terminals. Upon photon absorption cGMP levels decline leading to channel closure and membrane hyperpolarization that ultimately slows neurotransmitter release and signals the presence of light, the end point of the phototransduction cascade. Conducts cGMP- and cAMP-gated ion currents, with permeability for monovalent and divalent cations. The selectivity for Ca(2+) over Na(+) increases with cGMP concentrations, whereas the selectivity among monovalent ions is independent of the cGMP levels. Its function is as follows. Pore-forming subunit of the olfactory cyclic nucleotide-gated channel. Operates in the cilia of olfactory sensory neurons where chemical stimulation of the odorant is converted to an electrical signal. Mediates odorant-induced cAMP-dependent Ca(2+) influx triggering neuron depolarization. The rise of intracellular Ca(2+) levels potentiates the olfactory response by activating Ca(2+)-dependent Cl(-) channels, but it also serves as a negative feedback signal to desensitize the channel for rapid adaptation to odorants. The protein is Cyclic nucleotide-gated channel beta-1 of Rattus norvegicus (Rat).